The primary structure comprises 898 residues: Vacuolar membrane protease (898 aa).

At 1-14 (MGIVDYLVAAVSFR) the chain is on the cytoplasmic side. The helical transmembrane segment at 15–35 (TLPTTFVAVLVYLAIFISVLI) threads the bilayer. The Vacuolar segment spans residues 36-342 (TDELPATPKD…LFGQALIVFP (307 aa)). 3 N-linked (GlcNAc...) asparagine glycosylation sites follow: Asn50, Asn103, and Asn110. The Zn(2+) site is built by His139 and Asp151. The active-site Proton acceptor is Glu183. Glu184 is a binding site for Zn(2+). Asn200 is a glycosylation site (N-linked (GlcNAc...) asparagine). Zn(2+) is bound by residues Glu209 and His284. The chain crosses the membrane as a helical span at residues 343 to 365 (LSAMITFNIVFLVVGPIMLALLV). Residues 366 to 411 (TFDIVARHRRQEMIGGGYEEQGFFARAWTSFKSFRWVGGFWKHAKF) are Cytoplasmic-facing. The chain crosses the membrane as a helical span at residues 412 to 432 (WVALAVTVGLQVLLCVGYLYI). A topological domain (vacuolar) is located at residue Asn433. The chain crosses the membrane as a helical span at residues 434-454 (PLIAYSSSHIVLLSFLSLAYL). Residues 455 to 479 (STYLVHNIPSPTDTYGSHLPEQQKQ) lie on the Cytoplasmic side of the membrane. A helical transmembrane segment spans residues 480 to 500 (AALFQLYFFTWILLLAATVVG). The Vacuolar segment spans residues 501 to 509 (AKLSVGSFY). Residues 510 to 530 (ILSLWNAVLFAACAIGSIAGL) form a helical membrane-spanning segment. Over 531–593 (LSSHTVEGDA…PGGKEGEEVS (63 aa)) the chain is Cytoplasmic. A helical transmembrane segment spans residues 594-614 (GAIGWWFVQFVLSVPAVVILV). Residues 615–635 (SQLALLMLAATEQTLADGSPA) lie on the Vacuolar side of the membrane. A helical transmembrane segment spans residues 636–656 (VTVYGGASLMSVLAILPLAPF). The Cytoplasmic segment spans residues 657–664 (ACKLHRRV). A helical transmembrane segment spans residues 665-685 (AYVALVVLIASTAYAWLVFPF). The Vacuolar segment spans residues 686–898 (SERAPLKVFF…LVEGYKAFAV (213 aa)). Asn704, Asn733, and Asn764 each carry an N-linked (GlcNAc...) asparagine glycan.

It belongs to the peptidase M28 family. Zn(2+) is required as a cofactor.

Its subcellular location is the vacuole membrane. May be involved in vacuolar sorting and osmoregulation. The polypeptide is Vacuolar membrane protease (Schizophyllum commune (strain H4-8 / FGSC 9210) (Split gill fungus)).